Here is an 88-residue protein sequence, read N- to C-terminus: MGKVAAKMKVMPQSPEVDLDELQDRLENSLPEGAKISRVDREDVAFGLIALFPTVIIPDEAGGTDTVEDAFSGVDGVESVDVDEVGRI.

This sequence belongs to the EF-1-beta/EF-1-delta family.

Its function is as follows. Promotes the exchange of GDP for GTP in EF-1-alpha/GDP, thus allowing the regeneration of EF-1-alpha/GTP that could then be used to form the ternary complex EF-1-alpha/GTP/AAtRNA. In Natronomonas pharaonis (strain ATCC 35678 / DSM 2160 / CIP 103997 / JCM 8858 / NBRC 14720 / NCIMB 2260 / Gabara) (Halobacterium pharaonis), this protein is Elongation factor 1-beta.